The chain runs to 332 residues: L-lactate dehydrogenase C chain (332 aa).

Ser-2 bears the Blocked amino end (Ser) mark. NAD(+) contacts are provided by residues 29 to 57 (GNVG…DTNK) and Arg-99. Residues Arg-106, Asn-138, and Arg-169 each contribute to the substrate site. Asn-138 is an NAD(+) binding site. The active-site Proton acceptor is His-193. Thr-248 contributes to the substrate binding site.

It belongs to the LDH/MDH superfamily. LDH family. In terms of assembly, homotetramer. Interacts with RABL2/RABL2A; binds preferentially to GTP-bound RABL2. As to expression, expressed within the midpiece of sperm tail (at protein level).

The protein localises to the cytoplasm. It carries out the reaction (S)-lactate + NAD(+) = pyruvate + NADH + H(+). It participates in fermentation; pyruvate fermentation to lactate; (S)-lactate from pyruvate: step 1/1. Possible role in sperm motility. The protein is L-lactate dehydrogenase C chain (Ldhc) of Mus musculus (Mouse).